The following is a 517-amino-acid chain: MFQMKEYQIHLELDRSQQHNFLYPLLFREYIYALAHDHGLNRSTIPLENGGYDNKSSSLSVKRLISRTYQRIHLSIYAKDSNPNQFIGHNNQFYSQMISEGFSVIVEIPFSLRLVAFLEGKEKEMAKSHNFQSIHSIFPFFENNFSHLHYVLDVLIPYPIRPEILVRTFRYWVKDASSLHLLRFFLHEYFNWNSLITPKKSNSIFSTSKPRFFLFLYNSHVYEYESIFFFLRNQSSHLRSTSSGLLFERISFYGKVEDLVQVFVNDFQDNLWLFKHPIMHYVRYQGKSVLASKDMPLLMNKWKYYLVNLWQWHFHVWSQPGRIHINHLYKDYIYFLGYLSRGRLNTLVVRSQMLENAFLIDNAMKQFETTVPIIPLIGSLTTARFCNSLGHPISKPTWADSSDSYIIDRFMRICRNLSHYHSGSSKKKSLYRIKYILRVSCVKSLVRKHKSTVRVFLKRLGSEFLEEFFTEEEHVLSLIFPRAVFPSRRLYRGRVWYFDIICINDLVNHDKFEIFPN.

This sequence belongs to the intron maturase 2 family. MatK subfamily.

It localises to the plastid. The protein localises to the chloroplast. Its function is as follows. Usually encoded in the trnK tRNA gene intron. Probably assists in splicing its own and other chloroplast group II introns. The sequence is that of Maturase K from Acer pseudoplatanus (Sycamore maple).